The sequence spans 198 residues: Ribonuclease HII (198 aa).

In terms of domain architecture, RNase H type-2 spans 10–198 (QLVAGVDEVG…PVKRALGLAS (189 aa)). Residues aspartate 16, glutamate 17, and aspartate 108 each contribute to the a divalent metal cation site.

The protein belongs to the RNase HII family. Requires Mn(2+) as cofactor. The cofactor is Mg(2+).

It localises to the cytoplasm. The catalysed reaction is Endonucleolytic cleavage to 5'-phosphomonoester.. Functionally, endonuclease that specifically degrades the RNA of RNA-DNA hybrids. This is Ribonuclease HII from Escherichia coli O45:K1 (strain S88 / ExPEC).